A 502-amino-acid chain; its full sequence is Probable cytochrome P450 28d1 (502 aa).

Heme is bound at residue cysteine 446.

This sequence belongs to the cytochrome P450 family. The cofactor is heme.

The protein localises to the endoplasmic reticulum membrane. The protein resides in the microsome membrane. Functionally, may be involved in the metabolism of insect hormones and in the breakdown of synthetic insecticides. The protein is Probable cytochrome P450 28d1 (Cyp28d1) of Drosophila melanogaster (Fruit fly).